The following is a 405-amino-acid chain: Cytoplasmic 60S subunit biogenesis factor ZNF622 (405 aa).

2 U1-type zinc fingers span residues Tyr4–His28 and Thr67–His91. The tract at residues Ala135–Ala230 is disordered. Acidic residues predominate over residues Ala194–Lys228.

This sequence belongs to the REI1 family. As to quaternary structure, homo- and heterodimer. Associates with pre-60S ribosomal particles. Mainly expressed in the ovary. In terms of tissue distribution, mainly expressed in the testis.

Its subcellular location is the cytoplasm. The protein resides in the nucleus. In terms of biological role, pre-60S-associated cytoplasmic factor involved in the cytoplasmic maturation of the 60S subunit. In Gallus gallus (Chicken), this protein is Cytoplasmic 60S subunit biogenesis factor ZNF622 (ZNF622).